A 233-amino-acid chain; its full sequence is Large ribosomal subunit protein uL3 (233 aa).

The protein belongs to the universal ribosomal protein uL3 family. As to quaternary structure, part of the 50S ribosomal subunit. Forms a cluster with proteins L14 and L19.

In terms of biological role, one of the primary rRNA binding proteins, it binds directly near the 3'-end of the 23S rRNA, where it nucleates assembly of the 50S subunit. The polypeptide is Large ribosomal subunit protein uL3 (Ureaplasma urealyticum serovar 10 (strain ATCC 33699 / Western)).